The following is a 110-amino-acid chain: Cytochrome c6 (110 aa).

A signal peptide spans 1-25; that stretch reads MKKKLSVLFTVFSFFVIGFAQIAFA. Heme c contacts are provided by C39, C42, H43, and M83.

This sequence belongs to the cytochrome c family. PetJ subfamily. As to quaternary structure, monomer. In terms of processing, binds 1 heme c group covalently per subunit.

Its subcellular location is the plastid. The protein resides in the chloroplast thylakoid lumen. Functionally, functions as an electron carrier between membrane-bound cytochrome b6-f and photosystem I in oxygenic photosynthesis. In Pyropia yezoensis (Susabi-nori), this protein is Cytochrome c6 (petJ).